Reading from the N-terminus, the 489-residue chain is Probable anthranilate synthase component 1 (489 aa).

L-tryptophan contacts are provided by residues S54 and P262–M264. G297–T298 is a chorismate binding site. Residue E324 coordinates Mg(2+). Phosphoserine is present on residues S390 and S392. Chorismate contacts are provided by residues Y412, R433, G447 to G449, and G449. E462 contacts Mg(2+). S488 is modified (phosphoserine).

It belongs to the anthranilate synthase component I family. Tetramer of two components I and two components II. Mg(2+) is required as a cofactor.

It catalyses the reaction chorismate + L-glutamine = anthranilate + pyruvate + L-glutamate + H(+). Its pathway is amino-acid biosynthesis; L-tryptophan biosynthesis; L-tryptophan from chorismate: step 1/5. This is Probable anthranilate synthase component 1 (trp3) from Schizosaccharomyces pombe (strain 972 / ATCC 24843) (Fission yeast).